Consider the following 778-residue polypeptide: Ent-trachylobane synthase KSL2, chloroplastic (778 aa).

The N-terminal 37 residues, 1 to 37 (MLLTCTNSLKISSQAKEWESKTLTGMSLEQLNKRIRI), are a transit peptide targeting the chloroplast. Residues Asp529, Asp533, Asn672, Asp673, and Asp680 each contribute to the Mg(2+) site. A DDXXD motif motif is present at residues 529–533 (DDFFD).

It belongs to the terpene synthase family. Mg(2+) serves as cofactor.

It localises to the plastid. It is found in the chloroplast. It carries out the reaction ent-copalyl diphosphate = ent-trachylobane + diphosphate. The catalysed reaction is ent-copalyl diphosphate = ent-kaur-16-ene + diphosphate. Its pathway is secondary metabolite biosynthesis; terpenoid biosynthesis. Functionally, diterpene cyclase involved in the biosynthesis of labdane-related diterpenoids (LRDs) natural products. Catalyzes the cyclization of ent-CDP into ent-trachylobane as a major and ent-kaurene as a minor product. This Ricinus communis (Castor bean) protein is Ent-trachylobane synthase KSL2, chloroplastic.